Consider the following 386-residue polypeptide: Succinate--CoA ligase [ADP-forming] subunit beta (386 aa).

The 236-residue stretch at 9–244 folds into the ATP-grasp domain; that stretch reads KAILRSYGVS…LDEEDPKEIE (236 aa). ATP is bound by residues lysine 46, 53–55, glutamate 99, cysteine 102, and glutamate 107; that span reads GRG. Mg(2+)-binding residues include asparagine 199 and aspartate 213. Substrate is bound by residues asparagine 264 and 321-323; that span reads GIM.

The protein belongs to the succinate/malate CoA ligase beta subunit family. Heterotetramer of two alpha and two beta subunits. Mg(2+) serves as cofactor.

The catalysed reaction is succinate + ATP + CoA = succinyl-CoA + ADP + phosphate. The enzyme catalyses GTP + succinate + CoA = succinyl-CoA + GDP + phosphate. It functions in the pathway carbohydrate metabolism; tricarboxylic acid cycle; succinate from succinyl-CoA (ligase route): step 1/1. Its function is as follows. Succinyl-CoA synthetase functions in the citric acid cycle (TCA), coupling the hydrolysis of succinyl-CoA to the synthesis of either ATP or GTP and thus represents the only step of substrate-level phosphorylation in the TCA. The beta subunit provides nucleotide specificity of the enzyme and binds the substrate succinate, while the binding sites for coenzyme A and phosphate are found in the alpha subunit. This Bacillus cytotoxicus (strain DSM 22905 / CIP 110041 / 391-98 / NVH 391-98) protein is Succinate--CoA ligase [ADP-forming] subunit beta.